A 1192-amino-acid chain; its full sequence is DNA topoisomerase 2 (1192 aa).

ATP is bound by residues asparagine 64, asparagine 95, and 142–149; that span reads GTNGVGLK. Residues glutamate 438, aspartate 539, and aspartate 541 each coordinate Mg(2+). The Topo IIA-type catalytic domain maps to 707–1174; it reads IPNFLDGMTR…PGASVWLEEI (468 aa). Tyrosine 800 functions as the O-(5'-phospho-DNA)-tyrosine intermediate in the catalytic mechanism.

The protein belongs to the type II topoisomerase family. Mg(2+) serves as cofactor. The cofactor is Mn(2+). Ca(2+) is required as a cofactor.

Its subcellular location is the host cytoplasm. It catalyses the reaction ATP-dependent breakage, passage and rejoining of double-stranded DNA.. Functionally, type II topoisomerase. Processively relaxes supercoiled DNA. Displays DNA-supercoiling activity only when associated with the viral histone-like protein. This chain is DNA topoisomerase 2, found in Ornithodoros (relapsing fever ticks).